The primary structure comprises 109 residues: Cytochrome c oxidase subunit 6A1, mitochondrial (109 aa).

The N-terminal 24 residues, 1–24 (MAAAAGSRVFGLLGRSRLQLSRCM), are a transit peptide targeting the mitochondrion. Residues 25–34 (SSGAHGEEGS) are Mitochondrial matrix-facing. The chain crosses the membrane as a helical span at residues 35-59 (ARMWKALTYFVALPGVGVSMLNVFL). The Mitochondrial intermembrane portion of the chain corresponds to 60 to 109 (KSHHGEEERPEFVAYPHLRIRSKPFPWGDGNHTLFHNPHVNPLPTGYEDE).

It belongs to the cytochrome c oxidase subunit 6A family. In terms of assembly, component of the cytochrome c oxidase (complex IV, CIV), a multisubunit enzyme composed of 14 subunits. The complex is composed of a catalytic core of 3 subunits MT-CO1, MT-CO2 and MT-CO3, encoded in the mitochondrial DNA, and 11 supernumerary subunits COX4I1 (or COX4I2), COX5A, COX5B, COX6A2 (or COX6A1), COX6B1 (or COX6B2), COX6C, COX7A1 (or COX7A2), COX7B, COX7C, COX8B and NDUFA4, which are encoded in the nuclear genome. The complex exists as a monomer or a dimer and forms supercomplexes (SCs) in the inner mitochondrial membrane with NADH-ubiquinone oxidoreductase (complex I, CI) and ubiquinol-cytochrome c oxidoreductase (cytochrome b-c1 complex, complex III, CIII), resulting in different assemblies (supercomplex SCI(1)III(2)IV(1) and megacomplex MCI(2)III(2)IV(2)).

The protein resides in the mitochondrion inner membrane. The protein operates within energy metabolism; oxidative phosphorylation. Its function is as follows. Component of the cytochrome c oxidase, the last enzyme in the mitochondrial electron transport chain which drives oxidative phosphorylation. The respiratory chain contains 3 multisubunit complexes succinate dehydrogenase (complex II, CII), ubiquinol-cytochrome c oxidoreductase (cytochrome b-c1 complex, complex III, CIII) and cytochrome c oxidase (complex IV, CIV), that cooperate to transfer electrons derived from NADH and succinate to molecular oxygen, creating an electrochemical gradient over the inner membrane that drives transmembrane transport and the ATP synthase. Cytochrome c oxidase is the component of the respiratory chain that catalyzes the reduction of oxygen to water. Electrons originating from reduced cytochrome c in the intermembrane space (IMS) are transferred via the dinuclear copper A center (CU(A)) of subunit 2 and heme A of subunit 1 to the active site in subunit 1, a binuclear center (BNC) formed by heme A3 and copper B (CU(B)). The BNC reduces molecular oxygen to 2 water molecules unsing 4 electrons from cytochrome c in the IMS and 4 protons from the mitochondrial matrix. The polypeptide is Cytochrome c oxidase subunit 6A1, mitochondrial (COX6A1) (Bos taurus (Bovine)).